The sequence spans 223 residues: Enolase-phosphatase E1 (223 aa).

It belongs to the HAD-like hydrolase superfamily. MasA/MtnC family. As to quaternary structure, monomer. Mg(2+) is required as a cofactor.

The catalysed reaction is 5-methylsulfanyl-2,3-dioxopentyl phosphate + H2O = 1,2-dihydroxy-5-(methylsulfanyl)pent-1-en-3-one + phosphate. It participates in amino-acid biosynthesis; L-methionine biosynthesis via salvage pathway; L-methionine from S-methyl-5-thio-alpha-D-ribose 1-phosphate: step 3/6. The protein operates within amino-acid biosynthesis; L-methionine biosynthesis via salvage pathway; L-methionine from S-methyl-5-thio-alpha-D-ribose 1-phosphate: step 4/6. Bifunctional enzyme that catalyzes the enolization of 2,3-diketo-5-methylthiopentyl-1-phosphate (DK-MTP-1-P) into the intermediate 2-hydroxy-3-keto-5-methylthiopentenyl-1-phosphate (HK-MTPenyl-1-P), which is then dephosphorylated to form the acireductone 1,2-dihydroxy-3-keto-5-methylthiopentene (DHK-MTPene). The sequence is that of Enolase-phosphatase E1 from Aquifex aeolicus (strain VF5).